A 120-amino-acid chain; its full sequence is Ribosome-binding factor A (120 aa).

The protein belongs to the RbfA family. As to quaternary structure, monomer. Binds 30S ribosomal subunits, but not 50S ribosomal subunits or 70S ribosomes.

It is found in the cytoplasm. One of several proteins that assist in the late maturation steps of the functional core of the 30S ribosomal subunit. Associates with free 30S ribosomal subunits (but not with 30S subunits that are part of 70S ribosomes or polysomes). Required for efficient processing of 16S rRNA. May interact with the 5'-terminal helix region of 16S rRNA. This is Ribosome-binding factor A from Chlorobaculum tepidum (strain ATCC 49652 / DSM 12025 / NBRC 103806 / TLS) (Chlorobium tepidum).